A 253-amino-acid chain; its full sequence is UPF0246 protein lhv_1883 (253 aa).

Belongs to the UPF0246 family.

The polypeptide is UPF0246 protein lhv_1883 (Lactobacillus helveticus (strain DPC 4571)).